The sequence spans 756 residues: 5-methyltetrahydropteroyltriglutamate--homocysteine methyltransferase (756 aa).

5-methyltetrahydropteroyltri-L-glutamate-binding positions include 16–19 and Lys112; that span reads RELK. L-homocysteine is bound by residues 432-434 and Glu485; that span reads IGS. L-methionine contacts are provided by residues 432–434 and Glu485; that span reads IGS. 5-methyltetrahydropteroyltri-L-glutamate is bound by residues 516-517 and Trp562; that span reads RC. Asp600 lines the L-homocysteine pocket. Asp600 contacts L-methionine. Residue Glu606 coordinates 5-methyltetrahydropteroyltri-L-glutamate. Zn(2+) contacts are provided by His642, Cys644, and Glu666. The Proton donor role is filled by His695. Cys727 is a binding site for Zn(2+).

The protein belongs to the vitamin-B12 independent methionine synthase family. It depends on Zn(2+) as a cofactor.

It carries out the reaction 5-methyltetrahydropteroyltri-L-glutamate + L-homocysteine = tetrahydropteroyltri-L-glutamate + L-methionine. Its pathway is amino-acid biosynthesis; L-methionine biosynthesis via de novo pathway; L-methionine from L-homocysteine (MetE route): step 1/1. In terms of biological role, catalyzes the transfer of a methyl group from 5-methyltetrahydrofolate to homocysteine resulting in methionine formation. This Haemophilus influenzae (strain ATCC 51907 / DSM 11121 / KW20 / Rd) protein is 5-methyltetrahydropteroyltriglutamate--homocysteine methyltransferase.